Here is a 210-residue protein sequence, read N- to C-terminus: Orotate phosphoribosyltransferase (210 aa).

Lysine 26 serves as a coordination point for 5-phospho-alpha-D-ribose 1-diphosphate. 34 to 35 contacts orotate; it reads FF. Residues 72–73, arginine 98, lysine 99, lysine 102, histidine 104, and 123–131 contribute to the 5-phospho-alpha-D-ribose 1-diphosphate site; these read YK and DDVITAGTA. Residues threonine 127 and arginine 155 each contribute to the orotate site.

The protein belongs to the purine/pyrimidine phosphoribosyltransferase family. PyrE subfamily. As to quaternary structure, homodimer. Mg(2+) serves as cofactor.

It carries out the reaction orotidine 5'-phosphate + diphosphate = orotate + 5-phospho-alpha-D-ribose 1-diphosphate. The protein operates within pyrimidine metabolism; UMP biosynthesis via de novo pathway; UMP from orotate: step 1/2. Functionally, catalyzes the transfer of a ribosyl phosphate group from 5-phosphoribose 1-diphosphate to orotate, leading to the formation of orotidine monophosphate (OMP). This is Orotate phosphoribosyltransferase from Legionella pneumophila (strain Paris).